The following is a 481-amino-acid chain: MITIEQLLDILKKDHNFREVLDADEYHYHYQGFSFERLSYDSRQVDGKTLFFAKGATFKADYLKEAITNGLQLYISEVDYELGIPVVLVTDIKKAMSLIAMAFYGNPQEKLKLLAFTGTKGKTTAAYFAYHMLKESYKPAMFSTMNTTLDGKTFFKSQLTTPESLDLFAMMAECVTNGMTHLIMEVSSQAYLVDRVYGLTFDVGVFLNISPDHIGPIEHPTFEDYFYHKRLLMENSRAVVINSVMDHFSFLADQVADQEHVFYGPLSDNQITTSQAFSFEAKGQLAGHYDIQLIGHFNQENAMAAGLACLRLGASLADIQKGIAKTRVPGRMEVLTMTNHAKVFVDYAHNGDSLEKLLSVVEEHQTGKLMLILGAPGNKGESRRADFGRVIHQHPNLTVILTADDPNFEDPEDISKEIASHIARPVEIISDREQAIQKAMSLCQGAKDAVIIAGKGADAYQIVKGQQVAYAGDLAIAKHYL.

Ser42 is a binding site for UDP-N-acetyl-alpha-D-muramoyl-L-alanyl-D-glutamate. 118 to 124 (GTKGKTT) is a binding site for ATP. UDP-N-acetyl-alpha-D-muramoyl-L-alanyl-D-glutamate contacts are provided by residues Gln158, 160-161 (TT), Ser187, and Arg195. At Lys229 the chain carries N6-carboxylysine. Residues 404–407 (DDPN) carry the L-lysine recognition motif motif.

This sequence belongs to the MurCDEF family. MurE subfamily. Post-translationally, carboxylation is probably crucial for Mg(2+) binding and, consequently, for the gamma-phosphate positioning of ATP.

The protein localises to the cytoplasm. It catalyses the reaction UDP-N-acetyl-alpha-D-muramoyl-L-alanyl-D-glutamate + L-lysine + ATP = UDP-N-acetyl-alpha-D-muramoyl-L-alanyl-gamma-D-glutamyl-L-lysine + ADP + phosphate + H(+). The protein operates within cell wall biogenesis; peptidoglycan biosynthesis. In terms of biological role, catalyzes the addition of L-lysine to the nucleotide precursor UDP-N-acetylmuramoyl-L-alanyl-D-glutamate (UMAG) in the biosynthesis of bacterial cell-wall peptidoglycan. The chain is UDP-N-acetylmuramoyl-L-alanyl-D-glutamate--L-lysine ligase from Streptococcus pyogenes serotype M3 (strain SSI-1).